The sequence spans 41 residues: Photosystem I reaction center subunit IX (41 aa).

A helical membrane pass occupies residues 7-27 (YLSTAPVVAFAWLTFTAGFII).

The protein belongs to the PsaJ family.

It is found in the plastid. The protein localises to the chloroplast thylakoid membrane. Functionally, may help in the organization of the PsaE and PsaF subunits. The sequence is that of Photosystem I reaction center subunit IX from Stigeoclonium helveticum (Green alga).